We begin with the raw amino-acid sequence, 1245 residues long: MGNTKWTDEQLSAIETRNCNLLVAAAAGSGKTAVLVERIIRIITNEENPVDIDKLLVVTFTNAAAAEMRERIADAISKELENNPRSKNLQRQLTLLNRANITTMHSFCLDVIKNNYHRIDLDPSFRIGDQTEGILIKSEVIEELFEDKYEEEDIGFTNLVEIFSSYKNDNNLKNLVLDLYNFTMSGPWPEKWLINSAEAFNIKQLDELDRTNWVRVLAQSVKIELDGYVKMLEKAIEVTSKTDGLEPYMDNLLMELSYIKKAYESTDNGLEAMFNSLSSVQFSRLKSIKKDKVSDELSQNTVKKIRDDVKKGISELLNNAYSVNPQQMLRNIQGSYPYIKKLIELVLEFSARFSKRKRERNILDFNDLEHLCLKILSDYDDENNIIPSSIAMNFKEYFDEVLVDEYQDSNNVQETIINLVSRKNDDNPNVFMVGDVKQSIYRFRQAKPELFIEKYNTYDSSNGVNRKIQLYKNFRSRREIIDGVNYIFKEVMSEVVGELEYTDEEALNLGADFKENKFKDTIVGGPIEVNIIDKSHNETVVEDNEEQEEINNVILEGRIVAKRIKELMSKSEDEQIFKVLDKESGEYRPLKYRDIVILLRATKNWSEPLLDELSAEGIPVYADTGSGYFESIEIRTIISLLKVVDNPMQDIPVISVMRSPIMGFSAEEISDIRLVKKDNYFYENIKYISEEAYNSINESYSDVLIAKCKYFINSVDKWRNKSIYMAIDEFIWYLYMDTAYYGYVGAMPNGVLRQANLKILFQRARQFEKTSFKGLFNFINFINKLIKSSGDMGSAQVLGENEDVVRIMSIHKSKGLEFPVVFLCGLGKNFNLMDLNKSILYHDELGLGPDFIDIGKRFSIGTLAKESIKKKMKFETLSEEMRILYVACTRAKEKLIMTGTVGNLEKSAEKWLGSASLDYNRISPSEVLKGKSYLDWICMSLCQHRDGSVLSESFGTENLILKDDNSRWKVSFWNKGDLIDKTKTEVLEQGEGYELTIINNKPYDNYLYEEVDKILSYKYPFKASTTIKSNISVSDLKRRHAEEDYDTEQLYREKVKVVPKFLQEKKGLTPSEKGTAVHFVMKKIDFNRVSSTEEIKEQLHELFEKEFLLSEELKVINPTKILSFFRSDLGKKILDLNCRGEKIYREIPFYTEISSLEVDKTLDNIYKDEKIRLQGIIDCFFEYKGDIILIDYKTDYIMEGHEDEFKEKYRKQLDYYSDAIFKLTGKKVKYKYLYSFYLEKEIKII.

The region spanning 4-477 (TKWTDEQLSA…IQLYKNFRSR (474 aa)) is the UvrD-like helicase ATP-binding domain. ATP is bound at residue 25-32 (AAAGSGKT). Residues 517-815 (KFKDTIVGGP…RIMSIHKSKG (299 aa)) enclose the UvrD-like helicase C-terminal domain.

Belongs to the helicase family. AddA subfamily. In terms of assembly, heterodimer of AddA and AddB/RexB. Mg(2+) is required as a cofactor.

The catalysed reaction is Couples ATP hydrolysis with the unwinding of duplex DNA by translocating in the 3'-5' direction.. It carries out the reaction ATP + H2O = ADP + phosphate + H(+). Its function is as follows. The heterodimer acts as both an ATP-dependent DNA helicase and an ATP-dependent, dual-direction single-stranded exonuclease. Recognizes the chi site generating a DNA molecule suitable for the initiation of homologous recombination. The AddA nuclease domain is required for chi fragment generation; this subunit has the helicase and 3' -&gt; 5' nuclease activities. The protein is ATP-dependent helicase/nuclease subunit A of Clostridium beijerinckii (strain ATCC 51743 / NCIMB 8052) (Clostridium acetobutylicum).